The primary structure comprises 600 residues: DNA mismatch repair protein MutL (600 aa).

It belongs to the DNA mismatch repair MutL/HexB family.

In terms of biological role, this protein is involved in the repair of mismatches in DNA. It is required for dam-dependent methyl-directed DNA mismatch repair. May act as a 'molecular matchmaker', a protein that promotes the formation of a stable complex between two or more DNA-binding proteins in an ATP-dependent manner without itself being part of a final effector complex. The chain is DNA mismatch repair protein MutL from Rickettsia typhi (strain ATCC VR-144 / Wilmington).